Here is a 150-residue protein sequence, read N- to C-terminus: NADH-quinone oxidoreductase subunit A (150 aa).

3 helical membrane-spanning segments follow: residues 14–34 (WAFAVFLIGALGLCSLMLLGA), 70–90 (LVAMFFVIFDVEALFLYAWAV), and 98–118 (LGFIEAAVFIAILLAGLFYLV).

This sequence belongs to the complex I subunit 3 family. NDH-1 is composed of 13 different subunits. Subunits NuoA, H, J, K, L, M, N constitute the membrane sector of the complex.

Its subcellular location is the cell inner membrane. It carries out the reaction a quinone + NADH + 5 H(+)(in) = a quinol + NAD(+) + 4 H(+)(out). NDH-1 shuttles electrons from NADH, via FMN and iron-sulfur (Fe-S) centers, to quinones in the respiratory chain. The immediate electron acceptor for the enzyme in this species is believed to be ubiquinone. Couples the redox reaction to proton translocation (for every two electrons transferred, four hydrogen ions are translocated across the cytoplasmic membrane), and thus conserves the redox energy in a proton gradient. This Proteus mirabilis (strain HI4320) protein is NADH-quinone oxidoreductase subunit A.